The following is a 403-amino-acid chain: Glycerophosphocholine acyltransferase 1 (403 aa).

Residues 1 to 112 (MDHLEFDENT…SGKVVRFRDK (112 aa)) are Cytoplasmic-facing. A helical transmembrane segment spans residues 113-133 (LSFALGVSTCILTALLVGMAP). Over 134 to 137 (ESMH) the chain is Lumenal. The chain crosses the membrane as a helical span at residues 138–155 (LWYTIQLFVYLPLRYYTY). Topologically, residues 156–161 (QRKGYE) are cytoplasmic. Residues 162–182 (YFIADFCYWGNILLLVYIWIF) traverse the membrane as a helical segment. Residues 183–186 (PESR) lie on the Lumenal side of the membrane. The chain crosses the membrane as a helical span at residues 187 to 207 (RLFILSYSISYGTLAWSVVAW). The Cytoplasmic portion of the chain corresponds to 208 to 218 (RNSLLFHSIDK). Residues 219-239 (ITSLFIHFFPPLVLHTIVHLT) traverse the membrane as a helical segment. A glycan (N-linked (GlcNAc...) asparagine) is linked at N240. Topologically, residues 240 to 262 (NKSYLKDRFPAVLKVKKIDLLSS) are lumenal. Residues 263–283 (VEIASFFYALWQIWYYFFIQV) traverse the membrane as a helical segment. The Cytoplasmic segment spans residues 284–322 (GKQKQIQEGRPTSFTWLSKAYSKTKLGRAVAKLPQNLQP). A helical transmembrane segment spans residues 323-343 (FVFMIIQYLYSITTMLPCSLW). The Lumenal portion of the chain corresponds to 344-352 (YNNKLYSTA). A helical transmembrane segment spans residues 353 to 373 (FLALIFGWSVWNGASYYIDVF). Over 374–403 (GRRFQKELEALRQQLAETPTNSGSSSALSR) the chain is Cytoplasmic.

The protein belongs to the GPC1 family.

The protein resides in the endoplasmic reticulum membrane. It is found in the golgi apparatus membrane. The enzyme catalyses sn-glycerol 3-phosphocholine + an acyl-CoA = a 1-acyl-sn-glycero-3-phosphocholine + CoA. It catalyses the reaction sn-glycero-3-phosphoethanolamine + an acyl-CoA = a monoacyl-sn-glycero-3-phosphoethanolamine + CoA. It carries out the reaction sn-glycero-3-phosphoethanolamine + (9Z)-octadecenoyl-CoA = (9Z-octadecenoyl)-sn-glycero-3-phosphoethanolamine + CoA. In terms of biological role, glycerophosphocholine acyltransferase (GPCAT) that utilizes acyl-CoA to acylate glycero-3-phosphocholine (GPC), forming lysophosphatidylcholine (LPC). Shows broad acyl specificities with a preference for 16:0-CoA, polyunsaturated acyl-CoA, and the hydroxylated ricinoleoyl-CoA. Also catalyzes the acylation of glycero-3-phosphoethanolamine (GPE) with acyl-CoA. In addition to acyl-CoA, GPCAT efficiently utilizes LPC and lysophosphatidylethanolamine (LPE) as acyl donors in the acylation of GPC. Contributes to the maintenance of phosphatidylcholine (PC) homeostasis and might also have specific functions in acyl editing of PC, such as transferring acyl groups modified at the sn-2 position of PC to the sn-1. The polypeptide is Glycerophosphocholine acyltransferase 1 (Schizosaccharomyces pombe (strain 972 / ATCC 24843) (Fission yeast)).